Consider the following 854-residue polypeptide: Cell division control protein 24 (854 aa).

Positions 1–14 (MAIQTRFASGTSLS) are enriched in polar residues. A disordered region spans residues 1 to 24 (MAIQTRFASGTSLSDLKPKPSATS). One can recognise a Calponin-homology (CH) domain in the interval 135-246 (PNMEDTLLTF…VVETLMNSSP (112 aa)). The DH domain maps to 278–454 (EYVKIIKEFV…KNIARSINEN (177 aa)). Residues 478 to 668 (RISKFGELLY…WSSCLQQLIH (191 aa)) enclose the PH domain. Disordered stretches follow at residues 542-571 (ISAS…SNNI) and 674-745 (QFKA…FESE). Low complexity predominate over residues 682 to 707 (STSTTSSTAKSSSMMSPTTTMNTPNH). Residues 761–854 (SILFRISYNN…NEKFLNIRLY (94 aa)) form the PB1 domain.

Interacts with AXL2.

Its function is as follows. Promotes the exchange of CDC42-bound GDP by GTP. Controls the polarity of calmodulin, and the calcium regulatory process of bud emergence. CDC24 may be involved in the initial selection and organization of the budding site. In Saccharomyces cerevisiae (strain ATCC 204508 / S288c) (Baker's yeast), this protein is Cell division control protein 24 (CDC24).